Consider the following 199-residue polypeptide: Recombination protein RecR (199 aa).

Residues 58 to 73 (CSICCNITDTDPCSMC) form a C4-type zinc finger. One can recognise a Toprim domain in the interval 81-176 (SVICVVEDPR…KVTRIAHGLP (96 aa)).

Belongs to the RecR family.

May play a role in DNA repair. It seems to be involved in an RecBC-independent recombinational process of DNA repair. It may act with RecF and RecO. In Clostridioides difficile (strain 630) (Peptoclostridium difficile), this protein is Recombination protein RecR.